The chain runs to 138 residues: Small ribosomal subunit protein uS8c (138 aa).

This sequence belongs to the universal ribosomal protein uS8 family. Part of the 30S ribosomal subunit.

The protein resides in the plastid. It localises to the chloroplast. Its function is as follows. One of the primary rRNA binding proteins, it binds directly to 16S rRNA central domain where it helps coordinate assembly of the platform of the 30S subunit. The polypeptide is Small ribosomal subunit protein uS8c (rps8) (Oenothera elata subsp. hookeri (Hooker's evening primrose)).